The following is a 273-amino-acid chain: Protein B4 (273 aa).

The disordered stretch occupies residues 1 to 24; sequence MAPKKAVAAPEGGNKENAAVKGSS. The H15 domain maps to 40–118; it reads SHPPTLSMVV…GATGRFKLAK (79 aa). Residues 120–273 form a disordered region; the sequence is VKTTKAGKEN…AGKKGKKVTN (154 aa). Over residues 154–256 the composition is skewed to basic and acidic residues; the sequence is AKTEKEPKGE…KDVKAQKDST (103 aa). Tandem repeats lie at residues 189-198, 199-208, and 209-217. The 3 X 10 AA tandem repeats stretch occupies residues 189 to 217; the sequence is KEAKEVDKANKEAKEVDKANKEAKEVDKA. A compositionally biased stretch (basic residues) spans 264 to 273; the sequence is AGKKGKKVTN.

It belongs to the histone H1/H5 family. Interacts with nap1l1.

The protein resides in the nucleus. Its subcellular location is the chromosome. The polypeptide is Protein B4 (b4) (Xenopus laevis (African clawed frog)).